A 406-amino-acid chain; its full sequence is Arginine biosynthesis bifunctional protein ArgJ (406 aa).

T156, K182, T193, E279, N401, and T406 together coordinate substrate. T193 acts as the Nucleophile in catalysis.

It belongs to the ArgJ family. Heterotetramer of two alpha and two beta chains.

The protein localises to the cytoplasm. It carries out the reaction N(2)-acetyl-L-ornithine + L-glutamate = N-acetyl-L-glutamate + L-ornithine. The enzyme catalyses L-glutamate + acetyl-CoA = N-acetyl-L-glutamate + CoA + H(+). It participates in amino-acid biosynthesis; L-arginine biosynthesis; L-ornithine and N-acetyl-L-glutamate from L-glutamate and N(2)-acetyl-L-ornithine (cyclic): step 1/1. The protein operates within amino-acid biosynthesis; L-arginine biosynthesis; N(2)-acetyl-L-ornithine from L-glutamate: step 1/4. In terms of biological role, catalyzes two activities which are involved in the cyclic version of arginine biosynthesis: the synthesis of N-acetylglutamate from glutamate and acetyl-CoA as the acetyl donor, and of ornithine by transacetylation between N(2)-acetylornithine and glutamate. The protein is Arginine biosynthesis bifunctional protein ArgJ of Bacillus licheniformis (strain ATCC 14580 / DSM 13 / JCM 2505 / CCUG 7422 / NBRC 12200 / NCIMB 9375 / NCTC 10341 / NRRL NRS-1264 / Gibson 46).